Consider the following 632-residue polypeptide: SH2B adapter protein 2 (632 aa).

Tyr-52 is modified (phosphotyrosine). Ser-141 is subject to Phosphoserine. In terms of domain architecture, PH spans 193-306 (DIQREGALRF…WVADIQGCVD (114 aa)). Ser-310 is subject to Phosphoserine. The disordered stretch occupies residues 381 to 409 (TLESPGGSGSDSNNTGEQGAETDPEAEPE). The segment covering 400-409 (AETDPEAEPE) has biased composition (acidic residues). The 99-residue stretch at 417 to 515 (WFHGTLSRVK…SADITLRSYV (99 aa)) folds into the SH2 domain. Disordered stretches follow at residues 516-537 (RAQDPPPEPGPTPPAAPASPAC) and 558-632 (ASPS…YSFY). The span at 519–532 (DPPPEPGPTPPAAP) shows a compositional bias: pro residues. Low complexity-rich tracts occupy residues 558 to 579 (ASPSDAAGASSSSASSSSAASG) and 604 to 626 (EAVAATAAEEPPEAAPGRARAVE). Tyr-629 is modified (phosphotyrosine).

It belongs to the SH2B adapter family. Homodimer. Interacts with KIT/c-KIT, SHC1, EPOR, PDGFR, VAV1 and VAV3. Interacts (via N-terminal region) with SHC1. Interacts (via the phosphorylated C-terminus) with GRB2. Interacts (via its SH2 domain) with EPOR, INSR and KIT. Interacts with GRB2 after B-cell antigen receptor stimulation. Interacts (via PH domain) with VAV3. Interacts with NTRK1, NTRK2 and NTRK3 (phosphorylated); after stimulation of the receptor by its extracellular ligand and subsequent autophosphorylation of the receptor. Binds INSR, GRB2, ASB6 and CAP. Insulin stimulation leads to dissociation of CAP. Binds CBS only when SH2B2/APS has become phosphorylated. INSR binding does not depend on the phosphorylation of SH2B2/APS. In terms of processing, tyrosine phosphorylated by JAK2, KIT and other kinases activated by B-cell receptor in response to stimulation with cytokines, IL3, IL5, PDGF, IGF1, IGF2, CSF2/GM-CSF and cross-linking of the B-cell receptor complex. As to expression, expressed in spleen, prostate, testis, uterus, small intestine and skeletal muscle. Among hematopoietic cell lines, expressed exclusively in B-cells. Not expressed in most tumor cell lines.

The protein localises to the cytoplasm. Its subcellular location is the cell membrane. Functionally, adapter protein for several members of the tyrosine kinase receptor family. Involved in multiple signaling pathways. May be involved in coupling from immunoreceptor to Ras signaling. Acts as a negative regulator of cytokine signaling in collaboration with CBL. Binds to EPOR and suppresses EPO-induced STAT5 activation, possibly through a masking effect on STAT5 docking sites in EPOR. Suppresses PDGF-induced mitogenesis. May induce cytoskeletal reorganization via interaction with VAV3. This Homo sapiens (Human) protein is SH2B adapter protein 2 (SH2B2).